The primary structure comprises 51 residues: uncharacterized protein (51 aa).

The interval 1–24 (MGGRFSGRVGIEKGGHPPSAADHS) is disordered.

This is an uncharacterized protein from Escherichia coli.